A 1049-amino-acid polypeptide reads, in one-letter code: Solvent-resistant pump membrane transporter SrpB (1049 aa).

12 helical membrane passes run 10–30 (IFAWVLAIVAMLAGALSLAKM), 339–359 (SVVHTIFEAVVLVFLVMYLFL), 366–386 (LIPTLAVPVVLLATFALLPYF), 392–412 (VLTMYAMVLAIGLLVDDAIVV), 440–460 (GALVGIGMVLSAVFVPMAFFG), 470–490 (FAITIVVCMGLSILVALVFTP), 542–562 (LAFLLITGGTGYLFTQIPKAF), 871–891 (APLLYALTVLIVFLCLAALYE), 895–915 (VPVSVIMVVPLGILGAVLATL), 927–947 (VGLMTTVGLSAKNAILIVEFA), 973–993 (ILMTSLAFTFGVLPMAIASGA), and 1008–1028 (GMITATVLAVFFVPLFYVVVV).

The protein belongs to the resistance-nodulation-cell division (RND) (TC 2.A.6) family.

It localises to the cell inner membrane. Its function is as follows. The inner membrane transporter component of an organic solvent efflux pump. Involved in export of a number of low log POW compounds including hexane (log POW 3.5), toluene (log POW 2.5) and dimethylphthalate (log POW 2.3). The solvent resistance phenotype has been postulated to depend on the operon expression level. This is Solvent-resistant pump membrane transporter SrpB (srpB) from Pseudomonas putida (Arthrobacter siderocapsulatus).